The chain runs to 168 residues: Nicotinamide-nucleotide adenylyltransferase (168 aa).

The protein belongs to the archaeal NMN adenylyltransferase family.

Its subcellular location is the cytoplasm. It carries out the reaction beta-nicotinamide D-ribonucleotide + ATP + H(+) = diphosphate + NAD(+). It participates in cofactor biosynthesis; NAD(+) biosynthesis; NAD(+) from nicotinamide D-ribonucleotide: step 1/1. The chain is Nicotinamide-nucleotide adenylyltransferase from Methanocorpusculum labreanum (strain ATCC 43576 / DSM 4855 / Z).